The sequence spans 2020 residues: Metacaspase-2 (2020 aa).

Composition is skewed to basic and acidic residues over residues serine 51 to glutamine 60 and aspartate 69 to lysine 78. Disordered regions lie at residues serine 51 to lysine 78 and arginine 573 to asparagine 614. Low complexity predominate over residues asparagine 576 to asparagine 614.

The protein belongs to the peptidase C14B family.

It is found in the cytoplasm. With respect to regulation, ca(2+) does not appear to affect catalytic activity. Functionally, protease that cleaves specifically after arginine or lysine residues. May play a role in parasite growth and/or development. This Plasmodium falciparum (isolate 3D7) protein is Metacaspase-2.